The following is a 314-amino-acid chain: UDP-3-O-acyl-N-acetylglucosamine deacetylase (314 aa).

His82, His239, and Asp243 together coordinate Zn(2+). The active-site Proton donor is His266.

It belongs to the LpxC family. The cofactor is Zn(2+).

The catalysed reaction is a UDP-3-O-[(3R)-3-hydroxyacyl]-N-acetyl-alpha-D-glucosamine + H2O = a UDP-3-O-[(3R)-3-hydroxyacyl]-alpha-D-glucosamine + acetate. It participates in glycolipid biosynthesis; lipid IV(A) biosynthesis; lipid IV(A) from (3R)-3-hydroxytetradecanoyl-[acyl-carrier-protein] and UDP-N-acetyl-alpha-D-glucosamine: step 2/6. In terms of biological role, catalyzes the hydrolysis of UDP-3-O-myristoyl-N-acetylglucosamine to form UDP-3-O-myristoylglucosamine and acetate, the committed step in lipid A biosynthesis. In Myxococcus xanthus (strain DK1622), this protein is UDP-3-O-acyl-N-acetylglucosamine deacetylase.